Here is a 343-residue protein sequence, read N- to C-terminus: Pseudaminic acid synthase (343 aa).

Residues 287–343 form the AFP-like domain; the sequence is SLYASKDIKKGEIFSEENVKSVRPSFGLHPKFYQELLGKKASKDIEFGDALKESDFR.

The protein belongs to the pseudaminic acid synthase family. It depends on a divalent metal cation as a cofactor.

It carries out the reaction 2,4-diacetamido-2,4,6-trideoxy-beta-L-altrose + phosphoenolpyruvate + H2O = pseudaminate + phosphate. In terms of biological role, catalyzes the fifth step in the biosynthesis of pseudaminic acid, a sialic-acid-like sugar that is used to modify flagellin. Catalyzes the condensation of phosphoenolpyruvate with 2,4-diacetamido-2,4,6-trideoxy-beta-l-altropyranose, forming pseudaminic acid. The protein is Pseudaminic acid synthase (pseI) of Campylobacter jejuni subsp. jejuni serotype O:23/36 (strain 81-176).